Reading from the N-terminus, the 440-residue chain is Trigger factor (440 aa).

Residues 163-248 (GMVLTVDFSF…LKEIKKKELP (86 aa)) form the PPIase FKBP-type domain.

The protein belongs to the FKBP-type PPIase family. Tig subfamily.

The protein localises to the cytoplasm. It carries out the reaction [protein]-peptidylproline (omega=180) = [protein]-peptidylproline (omega=0). Its function is as follows. Involved in protein export. Acts as a chaperone by maintaining the newly synthesized protein in an open conformation. Functions as a peptidyl-prolyl cis-trans isomerase. This chain is Trigger factor, found in Trichlorobacter lovleyi (strain ATCC BAA-1151 / DSM 17278 / SZ) (Geobacter lovleyi).